A 298-amino-acid chain; its full sequence is Cholesterol 25-hydroxylase (298 aa).

N-linked (GlcNAc...) asparagine glycosylation is present at N5. 3 helical membrane-spanning segments follow: residues 38-58 (FFPV…FVVL), 84-104 (LLPC…PVTL), and 124-144 (LLSH…AWHL). In terms of domain architecture, Fatty acid hydroxylase spans 128–263 (VLICLLLFDT…FTHWDKMLGT (136 aa)). A Histidine box-1 motif is present at residues 142–146 (WHLLH). The Histidine box-2 motif lies at 157 to 161 (HKVHH). An N-linked (GlcNAc...) asparagine glycan is attached at N163. 2 helical membrane passes run 167–187 (FALA…FFDV) and 190–210 (VAML…NIWL). Positions 238–244 (HHDLHHS) match the Histidine box-3 motif.

This sequence belongs to the sterol desaturase family. Fe cation serves as cofactor. In terms of processing, N-glycosylated. Expressed in testicular macrophages at all stages, with the highest level in 10 day old animals.

The protein resides in the endoplasmic reticulum membrane. It carries out the reaction cholesterol + AH2 + O2 = 25-hydroxycholesterol + A + H2O. The catalysed reaction is cholesterol + NADPH + O2 + H(+) = 25-hydroxycholesterol + NADP(+) + H2O. Catalyzes the formation of 25-hydroxycholesterol from cholesterol, leading to repress cholesterol biosynthetic enzymes. Plays a key role in cell positioning and movement in lymphoid tissues: 25-hydroxycholesterol is an intermediate in biosynthesis of 7-alpha,25-dihydroxycholesterol (7-alpha,25-OHC), an oxysterol that acts as a ligand for the G protein-coupled receptor GPR183/EBI2, a chemotactic receptor for a number of lymphoid cells. May play an important role in regulating lipid metabolism by synthesizing a corepressor that blocks sterol regulatory element binding protein (SREBP) processing. In testis, production of 25-hydroxycholesterol by macrophages plays a role in Leydig cell differentiation. Required to restrain inflammation in macrophages: production of 25-hydroxycholesterol protects macrophages from cholesterol overload, thereby preventing mitochondrial DNA release and subsequent activation of the AIM2 inflammasome. Interferon-stimulated gene which has broad antiviral activities against a wide range of enveloped viruses. Functionally, catalyzes the formation of 25-hydroxycholesterol from cholesterol, leading to repress cholesterol biosynthetic enzymes. Plays a key role in cell positioning and movement in lymphoid tissues: 25-hydroxycholesterol is an intermediate in biosynthesis of 7-alpha,25-dihydroxycholesterol (7-alpha,25-OHC), an oxysterol that acts as a ligand for the G protein-coupled receptor GPR183/EBI2, a chemotactic receptor for a number of lymphoid cells. May play an important role in regulating lipid metabolism by synthesizing a corepressor that blocks sterol regulatory element binding protein (SREBP) processing. As an interferon-stimulated gene, has broad antiviral activities against a wide range of enveloped viruses. Its product, 25-hydroxycholesterol, activates the ER-localized enzyme ACAT to induce internalization of accessible cholesterol on the plasma membrane and restricts virus-host membranes fusion which inhibits virus replication. In testis, production of 25-hydroxycholesterol by macrophages plays a role in Leydig cell differentiation. The protein is Cholesterol 25-hydroxylase of Rattus norvegicus (Rat).